A 601-amino-acid polypeptide reads, in one-letter code: Uptake hydrogenase large subunit (601 aa).

Residues Cys74, Cys77, Cys580, and Cys583 each coordinate Ni(2+).

Belongs to the [NiFe]/[NiFeSe] hydrogenase large subunit family. In terms of assembly, heterodimer of a large and a small subunit. It depends on Ni(2+) as a cofactor.

The protein localises to the cell membrane. It catalyses the reaction H2 + A = AH2. In terms of biological role, this enzyme recycles the H(2) produced by nitrogenase to increase the production of ATP and to protect nitrogenase against inhibition or damage by O(2) under carbon- or phosphate-limited conditions. The protein is Uptake hydrogenase large subunit (hupL) of Azotobacter chroococcum mcd 1.